A 116-amino-acid chain; its full sequence is Ribonuclease P protein component (116 aa).

The protein belongs to the RnpA family. Consists of a catalytic RNA component (M1 or rnpB) and a protein subunit.

It catalyses the reaction Endonucleolytic cleavage of RNA, removing 5'-extranucleotides from tRNA precursor.. Functionally, RNaseP catalyzes the removal of the 5'-leader sequence from pre-tRNA to produce the mature 5'-terminus. It can also cleave other RNA substrates such as 4.5S RNA. The protein component plays an auxiliary but essential role in vivo by binding to the 5'-leader sequence and broadening the substrate specificity of the ribozyme. The polypeptide is Ribonuclease P protein component (Citrifermentans bemidjiense (strain ATCC BAA-1014 / DSM 16622 / JCM 12645 / Bem) (Geobacter bemidjiensis)).